Consider the following 188-residue polypeptide: Peptidyl-tRNA hydrolase (188 aa).

Position 14 (Y14) interacts with tRNA. Residue H19 is the Proton acceptor of the active site. Residues Y64, N66, and N112 each contribute to the tRNA site.

Belongs to the PTH family. As to quaternary structure, monomer.

Its subcellular location is the cytoplasm. It carries out the reaction an N-acyl-L-alpha-aminoacyl-tRNA + H2O = an N-acyl-L-amino acid + a tRNA + H(+). Functionally, hydrolyzes ribosome-free peptidyl-tRNAs (with 1 or more amino acids incorporated), which drop off the ribosome during protein synthesis, or as a result of ribosome stalling. Catalyzes the release of premature peptidyl moieties from peptidyl-tRNA molecules trapped in stalled 50S ribosomal subunits, and thus maintains levels of free tRNAs and 50S ribosomes. Releases Ala-tailed nascent peptides from stalled 50S ribosomal subunits. Non-templated Ala tailing occurs as part of the ribosome quality control (RQC) pathway. In the absence of Ala tails significantly less peptide release occurs. The Ala tail facilitates the interaction of Pth with the nascent peptide-tRNA ester bond as well as promoting nascent chain degradation; 3 Ala residues suffice to stimulate peptide release from stalled 50S ribosomal subunits. Complements a temperature-sensitive pth mutation in E.coli. This chain is Peptidyl-tRNA hydrolase, found in Bacillus subtilis (strain 168).